The sequence spans 402 residues: Dual-specificity RNA methyltransferase RlmN (402 aa).

Glu94 serves as the catalytic Proton acceptor. Positions 100–351 (EDDRGTLCIS…ATVRKTRGDD (252 aa)) constitute a Radical SAM core domain. Cys107 and Cys356 are joined by a disulfide. Positions 114, 118, and 121 each coordinate [4Fe-4S] cluster. S-adenosyl-L-methionine contacts are provided by residues 182–183 (GE), Ser214, 236–238 (SLH), and Asn313. Cys356 acts as the S-methylcysteine intermediate in catalysis.

It belongs to the radical SAM superfamily. RlmN family. Requires [4Fe-4S] cluster as cofactor.

The protein localises to the cytoplasm. It catalyses the reaction adenosine(2503) in 23S rRNA + 2 reduced [2Fe-2S]-[ferredoxin] + 2 S-adenosyl-L-methionine = 2-methyladenosine(2503) in 23S rRNA + 5'-deoxyadenosine + L-methionine + 2 oxidized [2Fe-2S]-[ferredoxin] + S-adenosyl-L-homocysteine. It carries out the reaction adenosine(37) in tRNA + 2 reduced [2Fe-2S]-[ferredoxin] + 2 S-adenosyl-L-methionine = 2-methyladenosine(37) in tRNA + 5'-deoxyadenosine + L-methionine + 2 oxidized [2Fe-2S]-[ferredoxin] + S-adenosyl-L-homocysteine. Specifically methylates position 2 of adenine 2503 in 23S rRNA and position 2 of adenine 37 in tRNAs. m2A2503 modification seems to play a crucial role in the proofreading step occurring at the peptidyl transferase center and thus would serve to optimize ribosomal fidelity. This Polynucleobacter asymbioticus (strain DSM 18221 / CIP 109841 / QLW-P1DMWA-1) (Polynucleobacter necessarius subsp. asymbioticus) protein is Dual-specificity RNA methyltransferase RlmN.